Consider the following 224-residue polypeptide: Urease accessory protein UreF (224 aa).

Belongs to the UreF family. As to quaternary structure, ureD, UreF and UreG form a complex that acts as a GTP-hydrolysis-dependent molecular chaperone, activating the urease apoprotein by helping to assemble the nickel containing metallocenter of UreC. The UreE protein probably delivers the nickel.

Its subcellular location is the cytoplasm. Functionally, required for maturation of urease via the functional incorporation of the urease nickel metallocenter. This is Urease accessory protein UreF from Azotobacter vinelandii (strain DJ / ATCC BAA-1303).